A 321-amino-acid polypeptide reads, in one-letter code: Cytochrome c biogenesis protein CcsA (321 aa).

A run of 8 helical transmembrane segments spans residues 1 to 21 (MIFI…ISVV), 36 to 56 (LSSS…GLLI), 70 to 90 (LYES…ILEV), 97 to 117 (GLGA…TSGL), 143 to 163 (ILLS…FLII), 229 to 249 (VIGL…VWAN), 256 to 276 (WSWD…AIYL), and 290 to 310 (AIIA…VDLL).

This sequence belongs to the CcmF/CycK/Ccl1/NrfE/CcsA family. As to quaternary structure, may interact with Ccs1.

It is found in the plastid. Its subcellular location is the chloroplast thylakoid membrane. Its function is as follows. Required during biogenesis of c-type cytochromes (cytochrome c6 and cytochrome f) at the step of heme attachment. The protein is Cytochrome c biogenesis protein CcsA of Cycas taitungensis (Prince sago).